The chain runs to 455 residues: Lysine histidine transporter-like 4 (455 aa).

Residues 1–38 (MAGIPDHIQDQHLVEEDQPFDLEDWLPITASRNANWYY) lie on the Cytoplasmic side of the membrane. Residues 39 to 59 (SAFHNVTAIVGAGVLGLPYAM) traverse the membrane as a helical segment. The Extracellular segment spans residues 60–61 (SE). A helical transmembrane segment spans residues 62–82 (LGWGPGVVVLILSWVITLYTL). Topologically, residues 83–113 (WQMIEMHEMFEGQRFDRYHELGQAAFGKKLG) are cytoplasmic. The chain crosses the membrane as a helical span at residues 114 to 134 (LYIIVPLQLLVEISVCIVYMV). The Extracellular segment spans residues 135 to 158 (TGGKSLKNVHDLALGDGDKCTKLR). The helical transmembrane segment at 159-179 (IQHFILIFASSQFVLSLLKNF) threads the bilayer. At 180–181 (NS) the chain is on the cytoplasmic side. Residues 182 to 202 (ISGVSLVAAVMSVSYSTIAWV) form a helical membrane-spanning segment. Topologically, residues 203–226 (ASLRKGATTGSVEYGYRKRTTSVP) are extracellular. Residues 227–247 (LAFLSALGEMAFAYAGHNVVL) traverse the membrane as a helical segment. Residues 248–267 (EIQATIPSTPENPSKRPMWK) are Cytoplasmic-facing. Residues 268–288 (GAVVAYIIVAFCYFPVALVGF) form a helical membrane-spanning segment. Topologically, residues 289-307 (KTFGNSVEESILESLTKPT) are extracellular. A helical transmembrane segment spans residues 308–328 (ALVIVANMFVVIHLLGSYQVY). Over 329–357 (AMPVFDMIESVMIRIWHFSPTRVLRFTIR) the chain is Cytoplasmic. The chain crosses the membrane as a helical span at residues 358–378 (WTFVAATMGIAVGLPYYSALL). Ser-379 is a topological domain (extracellular). Residues 380-400 (FFGGFVFAPTTYFIPCIMWLI) traverse the membrane as a helical segment. Over 401–412 (LKKPKRFSLSWC) the chain is Cytoplasmic. A helical transmembrane segment spans residues 413–433 (MNWFCIIFGLVLMIIAPIGGL). The Extracellular segment spans residues 434–455 (AKLIYNIQKGTLPNSRCNLPKH).

This sequence belongs to the amino acid/polyamine transporter 2 family. Amino acid/auxin permease (AAAP) (TC 2.A.18.2) subfamily.

Its subcellular location is the cell membrane. Amino acid transporter. The sequence is that of Lysine histidine transporter-like 4 from Arabidopsis thaliana (Mouse-ear cress).